Here is a 206-residue protein sequence, read N- to C-terminus: Small ribosomal subunit protein uS4 (206 aa).

An S4 RNA-binding domain is found at 96-156 (TRLDNVVYRM…EKSKKQARII (61 aa)).

Belongs to the universal ribosomal protein uS4 family. Part of the 30S ribosomal subunit. Contacts protein S5. The interaction surface between S4 and S5 is involved in control of translational fidelity.

One of the primary rRNA binding proteins, it binds directly to 16S rRNA where it nucleates assembly of the body of the 30S subunit. In terms of biological role, with S5 and S12 plays an important role in translational accuracy. The polypeptide is Small ribosomal subunit protein uS4 (Shewanella woodyi (strain ATCC 51908 / MS32)).